A 208-amino-acid polypeptide reads, in one-letter code: Harpin secretion protein HrpW (208 aa).

The next 4 membrane-spanning stretches (helical) occupy residues 2-22, 46-66, 149-169, and 176-196; these read LALF…CTAF, ALYG…AHDI, IGFL…NLLL, and VSPM…VSGW.

It belongs to the FliP/MopC/SpaP family.

It localises to the cell membrane. In terms of biological role, required for the secretion of harpin. The chain is Harpin secretion protein HrpW (hrpW) from Pseudomonas syringae pv. syringae.